We begin with the raw amino-acid sequence, 304 residues long: Recombination-associated protein RdgC (304 aa).

This sequence belongs to the RdgC family.

The protein resides in the cytoplasm. It is found in the nucleoid. May be involved in recombination. The sequence is that of Recombination-associated protein RdgC from Shewanella baltica (strain OS195).